Consider the following 250-residue polypeptide: Small ribosomal subunit protein uS2 (250 aa).

Positions 226-250 are disordered; sequence DQQNRQELGEDLGAAVEPAAEEALA. The segment covering 239–250 has biased composition (low complexity); that stretch reads AAVEPAAEEALA.

It belongs to the universal ribosomal protein uS2 family.

This Zymomonas mobilis subsp. mobilis (strain ATCC 31821 / ZM4 / CP4) protein is Small ribosomal subunit protein uS2 (rpsB).